A 328-amino-acid polypeptide reads, in one-letter code: Methionyl-tRNA formyltransferase (328 aa).

110-113 (SLLP) serves as a coordination point for (6S)-5,6,7,8-tetrahydrofolate.

The protein belongs to the Fmt family.

It catalyses the reaction L-methionyl-tRNA(fMet) + (6R)-10-formyltetrahydrofolate = N-formyl-L-methionyl-tRNA(fMet) + (6S)-5,6,7,8-tetrahydrofolate + H(+). Its function is as follows. Attaches a formyl group to the free amino group of methionyl-tRNA(fMet). The formyl group appears to play a dual role in the initiator identity of N-formylmethionyl-tRNA by promoting its recognition by IF2 and preventing the misappropriation of this tRNA by the elongation apparatus. In Prochlorococcus marinus subsp. pastoris (strain CCMP1986 / NIES-2087 / MED4), this protein is Methionyl-tRNA formyltransferase.